Reading from the N-terminus, the 434-residue chain is Alpha-enolase (434 aa).

Ser2 bears the N-acetylserine mark. An N6-acetyllysine modification is found at Lys5. A Phosphoserine modification is found at Ser27. The interval 31 to 38 is epitope recognized by CAR and healthy patient antibodies; the sequence is FRAAVPSG. Ser40 contributes to the Mg(2+) binding site. Tyr44 bears the Phosphotyrosine mark. The epitope recognized by CAR antibodies stretch occupies residues 56-63; sequence RYMGKGVS. Lys60 bears the N6-acetyllysine; alternate mark. Lys60 bears the N6-succinyllysine; alternate mark. Residues Lys64 and Lys71 each carry the N6-acetyllysine modification. The residue at position 89 (Lys89) is an N6-acetyllysine; alternate. Lys89 carries the N6-succinyllysine; alternate modification. 2 positions are modified to N6-acetyllysine: Lys92 and Lys126. A required for repression of c-myc promoter activity region spans residues 97–237; sequence MDGTENKSKF…KTAIGKAGYT (141 aa). Substrate-binding residues include His158 and Glu167. N6-acetyllysine occurs at positions 193 and 199. Lys202 bears the N6-acetyllysine; alternate mark. Lys202 is covalently cross-linked (Glycyl lysine isopeptide (Lys-Gly) (interchain with G-Cter in SUMO2); alternate). Glu210 functions as the Proton donor in the catalytic mechanism. Residues Lys228 and Lys233 each carry the N6-acetyllysine; alternate modification. The residue at position 228 (Lys228) is an N6-succinyllysine; alternate. Lys228 is subject to N6-(2-hydroxyisobutyryl)lysine; alternate. At Lys233 the chain carries N6-malonyllysine; alternate. Residue Asp245 participates in Mg(2+) binding. Residue Ser254 is modified to Phosphoserine. Lys256 is modified (N6-acetyllysine). Phosphoserine occurs at positions 263 and 272. Position 281 is an N6-acetyllysine; alternate (Lys281). Lys281 carries the post-translational modification N6-(2-hydroxyisobutyryl)lysine; alternate. Lys285 bears the N6-acetyllysine mark. Residue Tyr287 is modified to Phosphotyrosine. Phosphoserine is present on Ser291. Mg(2+) contacts are provided by Glu293 and Asp318. Positions 293 and 318 each coordinate substrate. An N6-acetyllysine mark is found at Lys335 and Lys343. Lys343 acts as the Proton acceptor in catalysis. Substrate-binding positions include 370-373 and Lys394; that span reads SHRS. The tract at residues 405-434 is required for interaction with PLG; sequence AKYNQLLRIEEELGSKAKFAGRNFRNPLAK. Lys406 carries the post-translational modification N6-acetyllysine. An N6-acetyllysine; alternate modification is found at Lys420. Residue Lys420 is modified to N6-succinyllysine; alternate. At Lys420 the chain carries N6-malonyllysine; alternate.

This sequence belongs to the enolase family. In terms of assembly, mammalian enolase is composed of 3 isozyme subunits, alpha, beta and gamma, which can form homodimers or heterodimers which are cell-type and development-specific. ENO1 interacts with PLG in the neuronal plasma membrane and promotes its activation. The C-terminal lysine is required for this binding. Isoform MBP-1 interacts with TRAPPC2B. Interacts with ENO4 and PGAM2. Interacts with CMTM6. Mg(2+) is required as a cofactor. ISGylated. Post-translationally, lysine 2-hydroxyisobutyrylation (Khib) by p300/EP300 activates the phosphopyruvate hydratase activity. In terms of tissue distribution, the alpha/alpha homodimer is expressed in embryo and in most adult tissues. The alpha/beta heterodimer and the beta/beta homodimer are found in striated muscle, and the alpha/gamma heterodimer and the gamma/gamma homodimer in neurons.

The protein resides in the cytoplasm. The protein localises to the cell membrane. It is found in the myofibril. It localises to the sarcomere. Its subcellular location is the m line. The protein resides in the nucleus. It catalyses the reaction (2R)-2-phosphoglycerate = phosphoenolpyruvate + H2O. It participates in carbohydrate degradation; glycolysis; pyruvate from D-glyceraldehyde 3-phosphate: step 4/5. Its function is as follows. Glycolytic enzyme the catalyzes the conversion of 2-phosphoglycerate to phosphoenolpyruvate. In addition to glycolysis, involved in various processes such as growth control, hypoxia tolerance and allergic responses. May also function in the intravascular and pericellular fibrinolytic system due to its ability to serve as a receptor and activator of plasminogen on the cell surface of several cell-types such as leukocytes and neurons. Stimulates immunoglobulin production. Functionally, binds to the myc promoter and acts as a transcriptional repressor. May be a tumor suppressor. The sequence is that of Alpha-enolase (ENO1) from Homo sapiens (Human).